A 197-amino-acid chain; its full sequence is Probable nicotinate-nucleotide adenylyltransferase (197 aa).

It belongs to the NadD family.

The catalysed reaction is nicotinate beta-D-ribonucleotide + ATP + H(+) = deamido-NAD(+) + diphosphate. It participates in cofactor biosynthesis; NAD(+) biosynthesis; deamido-NAD(+) from nicotinate D-ribonucleotide: step 1/1. Functionally, catalyzes the reversible adenylation of nicotinate mononucleotide (NaMN) to nicotinic acid adenine dinucleotide (NaAD). The protein is Probable nicotinate-nucleotide adenylyltransferase of Pseudothermotoga lettingae (strain ATCC BAA-301 / DSM 14385 / NBRC 107922 / TMO) (Thermotoga lettingae).